The chain runs to 249 residues: tRNA pseudouridine synthase A (249 aa).

Residue D53 is the Nucleophile of the active site. Substrate is bound at residue Y111.

Belongs to the tRNA pseudouridine synthase TruA family. In terms of assembly, homodimer.

It carries out the reaction uridine(38/39/40) in tRNA = pseudouridine(38/39/40) in tRNA. Formation of pseudouridine at positions 38, 39 and 40 in the anticodon stem and loop of transfer RNAs. In Streptococcus suis (strain 98HAH33), this protein is tRNA pseudouridine synthase A.